A 456-amino-acid polypeptide reads, in one-letter code: 26S proteasome non-ATPase regulatory subunit 12 (456 aa).

Residue A2 is modified to N-acetylalanine. K92 is covalently cross-linked (Glycyl lysine isopeptide (Lys-Gly) (interchain with G-Cter in SUMO1); alternate). K92 participates in a covalent cross-link: Glycyl lysine isopeptide (Lys-Gly) (interchain with G-Cter in SUMO2); alternate. K221 and K368 each carry N6-acetyllysine. The 179-residue stretch at 242–420 (SICKHYRAIY…GIINFQRPKD (179 aa)) folds into the PCI domain.

It belongs to the proteasome subunit p55 family. Component of the 19S proteasome regulatory particle complex. The 26S proteasome consists of a 20S core particle (CP) and two 19S regulatory subunits (RP). The regulatory particle is made of a lid composed of 9 subunits including PSMD12, a base containing 6 ATPases and few additional components. Interacts with ERCC6.

Component of the 26S proteasome, a multiprotein complex involved in the ATP-dependent degradation of ubiquitinated proteins. This complex plays a key role in the maintenance of protein homeostasis by removing misfolded or damaged proteins, which could impair cellular functions, and by removing proteins whose functions are no longer required. Therefore, the proteasome participates in numerous cellular processes, including cell cycle progression, apoptosis, or DNA damage repair. The chain is 26S proteasome non-ATPase regulatory subunit 12 (PSMD12) from Homo sapiens (Human).